A 422-amino-acid chain; its full sequence is Cytochrome P450-pinF1, plant-inducible (422 aa).

C369 contacts heme.

It belongs to the cytochrome P450 family. Requires heme as cofactor.

In terms of biological role, not essential for virulence, but may be involved in the detoxification of plant protective agents at the site of wounding. The polypeptide is Cytochrome P450-pinF1, plant-inducible (cyp103) (Rhizobium radiobacter (Agrobacterium tumefaciens)).